The primary structure comprises 57 residues: Large ribosomal subunit protein bL32c (57 aa).

This sequence belongs to the bacterial ribosomal protein bL32 family.

Its subcellular location is the plastid. The protein resides in the chloroplast. This is Large ribosomal subunit protein bL32c from Drimys granadensis.